The following is a 133-amino-acid chain: p53 and DNA damage-regulated protein 1 (133 aa).

This sequence belongs to the prefoldin subunit beta family. Component of the PAQosome complex which is responsible for the biogenesis of several protein complexes and which consists of R2TP complex members RUVBL1, RUVBL2, RPAP3 and PIH1D1, URI complex members PFDN2, PFDN6, PDRG1, UXT and URI1 as well as ASDURF, POLR2E and DNAAF10/WDR92.

Its subcellular location is the cytoplasm. Its function is as follows. May play a role in chaperone-mediated protein folding. This is p53 and DNA damage-regulated protein 1 (Pdrg1) from Mus musculus (Mouse).